A 120-amino-acid chain; its full sequence is Large ribosomal subunit protein uL22 (120 aa).

The segment at 1–25 is disordered; that stretch reads MFVNKKYTAKGKNLPSSPKKVRPIA.

Belongs to the universal ribosomal protein uL22 family. Part of the 50S ribosomal subunit.

In terms of biological role, this protein binds specifically to 23S rRNA; its binding is stimulated by other ribosomal proteins, e.g. L4, L17, and L20. It is important during the early stages of 50S assembly. It makes multiple contacts with different domains of the 23S rRNA in the assembled 50S subunit and ribosome. Functionally, the globular domain of the protein is located near the polypeptide exit tunnel on the outside of the subunit, while an extended beta-hairpin is found that lines the wall of the exit tunnel in the center of the 70S ribosome. In Borrelia recurrentis (strain A1), this protein is Large ribosomal subunit protein uL22.